The sequence spans 1364 residues: Poly(A) RNA polymerase gld-2 homolog A (1364 aa).

The span at 27–51 shows a compositional bias: low complexity; it reads NSTNTTASPATTNTINTTTKTITTS. Disordered stretches follow at residues 27-97, 159-203, 315-338, 417-535, and 666-732; these read NSTN…VVHT, SRPS…EAIT, AVGT…VSST, APAT…STST, and LGLD…LSDA. Over residues 66-91 the composition is skewed to basic and acidic residues; it reads LEIEDSGRNEPEDLEHGAAKPLEQRK. Positions 175 to 198 are enriched in low complexity; sequence GTTVAASTTPSTTVTTSSGSPGSG. The segment covering 417-426 has biased composition (low complexity); the sequence is APATGAASSS. Polar residues predominate over residues 427 to 444; the sequence is DQNVATKRNHQGAATQNN. The segment covering 445 to 455 has biased composition (basic residues); the sequence is HRNRHNAKKGG. The span at 461-493 shows a compositional bias: low complexity; it reads KELTSNSSESLSNSSSKSQLNKRPSSSSSISPI. Basic residues predominate over residues 494–504; the sequence is KHPHRNYRNRM. Polar residues predominate over residues 509 to 535; that stretch reads TEPTEQKAATTTVPISNYQPPQQSTST. Mg(2+) contacts are provided by aspartate 993 and aspartate 995. The PAP-associated domain maps to 1163–1224; the sequence is TLGDLLLSFL…CIEEPFDQTN (62 aa).

It belongs to the DNA polymerase type-B-like family. GLD2 subfamily. In terms of assembly, interacts with Fmr1 and eIF-4E. Requires Mg(2+) as cofactor. The cofactor is Mn(2+). As to expression, expressed in the brain.

It is found in the cytoplasm. The protein localises to the nucleus. The enzyme catalyses RNA(n) + ATP = RNA(n)-3'-adenine ribonucleotide + diphosphate. Its function is as follows. Cytoplasmic poly(A) RNA polymerase that adds successive AMP monomers to the 3'-end of specific RNAs, forming a poly(A) tail. In contrast to the canonical nuclear poly(A) RNA polymerase, it only adds poly(A) to selected cytoplasmic mRNAs. Required for formation of long term memory. In Drosophila melanogaster (Fruit fly), this protein is Poly(A) RNA polymerase gld-2 homolog A (Gld2).